We begin with the raw amino-acid sequence, 447 residues long: UPF0210 protein lp_2507 (447 aa).

The protein belongs to the UPF0210 family. As to quaternary structure, homodimer.

The protein is UPF0210 protein lp_2507 of Lactiplantibacillus plantarum (strain ATCC BAA-793 / NCIMB 8826 / WCFS1) (Lactobacillus plantarum).